The chain runs to 72 residues: Translation initiation factor IF-1 (72 aa).

Positions 1 to 72 (MAKDDVIEVD…DKGRITYRHK (72 aa)) constitute an S1-like domain.

The protein belongs to the IF-1 family. In terms of assembly, component of the 30S ribosomal translation pre-initiation complex which assembles on the 30S ribosome in the order IF-2 and IF-3, IF-1 and N-formylmethionyl-tRNA(fMet); mRNA recruitment can occur at any time during PIC assembly.

It localises to the cytoplasm. Its function is as follows. One of the essential components for the initiation of protein synthesis. Stabilizes the binding of IF-2 and IF-3 on the 30S subunit to which N-formylmethionyl-tRNA(fMet) subsequently binds. Helps modulate mRNA selection, yielding the 30S pre-initiation complex (PIC). Upon addition of the 50S ribosomal subunit IF-1, IF-2 and IF-3 are released leaving the mature 70S translation initiation complex. The protein is Translation initiation factor IF-1 of Helicobacter hepaticus (strain ATCC 51449 / 3B1).